Consider the following 233-residue polypeptide: tRNA1(Val) (adenine(37)-N6)-methyltransferase (233 aa).

The protein belongs to the methyltransferase superfamily. tRNA (adenine-N(6)-)-methyltransferase family.

It is found in the cytoplasm. The catalysed reaction is adenosine(37) in tRNA1(Val) + S-adenosyl-L-methionine = N(6)-methyladenosine(37) in tRNA1(Val) + S-adenosyl-L-homocysteine + H(+). Specifically methylates the adenine in position 37 of tRNA(1)(Val) (anticodon cmo5UAC). The chain is tRNA1(Val) (adenine(37)-N6)-methyltransferase from Shewanella amazonensis (strain ATCC BAA-1098 / SB2B).